A 185-amino-acid chain; its full sequence is Intraflagellar transport protein 22 homolog (185 aa).

GTP-binding positions include glycine 10–threonine 17, aspartate 63–aspartate 67, and histidine 123–glycine 126. Position 137 is a phosphoserine (serine 137).

Belongs to the small GTPase superfamily. Rab family. As to quaternary structure, component of the IFT complex B, at least composed of IFT20, IFT22, IFT25, IFT27, IFT46, IFT52, TRAF3IP1/IFT54, IFT57, IFT74, IFT80, IFT81, and IFT88. Interacts with IFT88. Interacts with CFAP61.

It is found in the cell projection. The protein localises to the cilium. Small GTPase-like component of the intraflagellar transport (IFT) complex B. This is Intraflagellar transport protein 22 homolog (IFT22) from Homo sapiens (Human).